An 83-amino-acid polypeptide reads, in one-letter code: Large ribosomal subunit protein bL27 (83 aa).

Belongs to the bacterial ribosomal protein bL27 family.

The sequence is that of Large ribosomal subunit protein bL27 from Bifidobacterium adolescentis (strain ATCC 15703 / DSM 20083 / NCTC 11814 / E194a).